Consider the following 271-residue polypeptide: Orotidine 5'-phosphate decarboxylase (271 aa).

Lys-97 functions as the Proton donor in the catalytic mechanism.

It belongs to the OMP decarboxylase family. Type 2 subfamily.

The catalysed reaction is orotidine 5'-phosphate + H(+) = UMP + CO2. The protein operates within pyrimidine metabolism; UMP biosynthesis via de novo pathway; UMP from orotate: step 2/2. The chain is Orotidine 5'-phosphate decarboxylase from Leptospira borgpetersenii serovar Hardjo-bovis (strain L550).